The following is a 338-amino-acid chain: Lipoate-protein ligase A (338 aa).

The BPL/LPL catalytic domain occupies 29–216 (PATQRVLFLW…AFFAHYGERV (188 aa)). ATP is bound by residues arginine 71, 76–79 (GAVF), and lysine 134. Lysine 134 provides a ligand contact to (R)-lipoate.

This sequence belongs to the LplA family. Monomer.

It is found in the cytoplasm. The enzyme catalyses L-lysyl-[lipoyl-carrier protein] + (R)-lipoate + ATP = N(6)-[(R)-lipoyl]-L-lysyl-[lipoyl-carrier protein] + AMP + diphosphate + H(+). It functions in the pathway protein modification; protein lipoylation via exogenous pathway; protein N(6)-(lipoyl)lysine from lipoate: step 1/2. It participates in protein modification; protein lipoylation via exogenous pathway; protein N(6)-(lipoyl)lysine from lipoate: step 2/2. Catalyzes both the ATP-dependent activation of exogenously supplied lipoate to lipoyl-AMP and the transfer of the activated lipoyl onto the lipoyl domains of lipoate-dependent enzymes. The polypeptide is Lipoate-protein ligase A (Escherichia coli O8 (strain IAI1)).